Consider the following 349-residue polypeptide: tRNA-specific 2-thiouridylase MnmA (349 aa).

ATP-binding positions include 6–13 and Met32; that span reads LLSGGVDS. Cys103 acts as the Nucleophile in catalysis. A disulfide bridge connects residues Cys103 and Cys195. Gly127 lines the ATP pocket. The interaction with tRNA stretch occupies residues 145–147; sequence KDQ. The active-site Cysteine persulfide intermediate is the Cys195.

The protein belongs to the MnmA/TRMU family.

Its subcellular location is the cytoplasm. It catalyses the reaction S-sulfanyl-L-cysteinyl-[protein] + uridine(34) in tRNA + AH2 + ATP = 2-thiouridine(34) in tRNA + L-cysteinyl-[protein] + A + AMP + diphosphate + H(+). Its function is as follows. Catalyzes the 2-thiolation of uridine at the wobble position (U34) of tRNA, leading to the formation of s(2)U34. The polypeptide is tRNA-specific 2-thiouridylase MnmA (Pseudothermotoga lettingae (strain ATCC BAA-301 / DSM 14385 / NBRC 107922 / TMO) (Thermotoga lettingae)).